Consider the following 59-residue polypeptide: Large ribosomal subunit protein bL33 (59 aa).

The interval R26–K59 is disordered.

The protein belongs to the bacterial ribosomal protein bL33 family.

This Chlorobium phaeobacteroides (strain BS1) protein is Large ribosomal subunit protein bL33.